The following is a 481-amino-acid chain: Fibrinogen beta chain (481 aa).

An N-terminal signal peptide occupies residues 1 to 19; that stretch reads MRHLWLLLLLCVFSVQTQA. The tract at residues 22 to 81 is disordered; sequence DDYDEPTDSLDARGHRPVDRRKEEPPSLRPAPPPISGGGYRARPAKATANQKKVERRPPD. Residues 31–47 are compositionally biased toward basic and acidic residues; it reads LDARGHRPVDRRKEEPP. The segment at 35–37 is beta-chain polymerization, binding distal domain of another fibrin; sequence GHR. Positions 149–213 form a coiled coil; the sequence is QAQVKENENV…SDISAQMEYC (65 aa). 2 disulfide bridges follow: Cys221–Cys306 and Cys231–Cys260. The region spanning 222–478 is the Fibrinogen C-terminal domain; sequence NIPVVSGKEC…RMSMKIRPFF (257 aa). N-linked (GlcNAc...) asparagine glycosylation occurs at Asn384. Cys414 and Cys427 are oxidised to a cystine.

As to quaternary structure, heterohexamer; disulfide linked. Contains 2 sets of 3 non-identical chains (alpha, beta and gamma). The 2 heterotrimers are in head to head conformation with the N-termini in a small central domain. Conversion of fibrinogen to fibrin is triggered by thrombin, which cleaves fibrinopeptides A and B from alpha and beta chains, and thus exposes the N-terminal polymerization sites responsible for the formation of the soft clot.

The protein localises to the secreted. Cleaved by the protease thrombin to yield monomers which, together with fibrinogen alpha (FGA) and fibrinogen gamma (FGG), polymerize to form an insoluble fibrin matrix. Fibrin has a major function in hemostasis as one of the primary components of blood clots. In addition, functions during the early stages of wound repair to stabilize the lesion and guide cell migration during re-epithelialization. Was originally thought to be essential for platelet aggregation, based on in vitro studies using anticoagulated blood. However, subsequent studies have shown that it is not absolutely required for thrombus formation in vivo. Enhances expression of SELP in activated platelets via an ITGB3-dependent pathway. Maternal fibrinogen is essential for successful pregnancy. Fibrin deposition is also associated with infection, where it protects against IFNG-mediated hemorrhage. May also facilitate the immune response via both innate and T-cell mediated pathways. This is Fibrinogen beta chain (Fgb) from Mus musculus (Mouse).